The sequence spans 137 residues: Basic phospholipase A2 homolog 4a (137 aa).

An N-terminal signal peptide occupies residues 1 to 16 (MRTLWIVTVLLVGVEG). Intrachain disulfides connect Cys-42–Cys-131, Cys-44–Cys-60, Cys-59–Cys-111, Cys-65–Cys-137, Cys-66–Cys-104, Cys-73–Cys-97, and Cys-91–Cys-102. The segment at 121–133 (KKYKIYPKFFCKK) is important for membrane-damaging activities in eukaryotes and bacteria; heparin-binding.

It belongs to the phospholipase A2 family. Group II subfamily. K49 sub-subfamily. As to quaternary structure, homodimer; non-covalently linked. Expressed by the venom gland.

It is found in the secreted. Snake venom phospholipase A2 homolog that lacks enzymatic activity. Is myotoxic and displays edema-inducing activities. A model of myotoxic mechanism has been proposed: an apo Lys49-PLA2 is activated by the entrance of a hydrophobic molecule (e.g. fatty acid) at the hydrophobic channel of the protein leading to a reorientation of a monomer. This reorientation causes a transition between 'inactive' to 'active' states, causing alignment of C-terminal and membrane-docking sites (MDoS) side-by-side and putting the membrane-disruption sites (MDiS) in the same plane, exposed to solvent and in a symmetric position for both monomers. The MDoS region stabilizes the toxin on membrane by the interaction of charged residues with phospholipid head groups. Subsequently, the MDiS region destabilizes the membrane with penetration of hydrophobic residues. This insertion causes a disorganization of the membrane, allowing an uncontrolled influx of ions (i.e. calcium and sodium), and eventually triggering irreversible intracellular alterations and cell death. The sequence is that of Basic phospholipase A2 homolog 4a from Bothrops asper (Terciopelo).